The sequence spans 295 residues: Fructose-bisphosphate aldolase class 1 (295 aa).

Catalysis depends on glutamate 176, which acts as the Proton acceptor. Lysine 213 (schiff-base intermediate with dihydroxyacetone-P) is an active-site residue.

It belongs to the class I fructose-bisphosphate aldolase family.

It carries out the reaction beta-D-fructose 1,6-bisphosphate = D-glyceraldehyde 3-phosphate + dihydroxyacetone phosphate. It participates in carbohydrate degradation; glycolysis; D-glyceraldehyde 3-phosphate and glycerone phosphate from D-glucose: step 4/4. The sequence is that of Fructose-bisphosphate aldolase class 1 from Fusobacterium nucleatum subsp. nucleatum (strain ATCC 25586 / DSM 15643 / BCRC 10681 / CIP 101130 / JCM 8532 / KCTC 2640 / LMG 13131 / VPI 4355).